A 101-amino-acid polypeptide reads, in one-letter code: Integration host factor subunit beta (101 aa).

Residues 57-76 (PARAGRNPRTGEHVPVDQKS) form a disordered region.

This sequence belongs to the bacterial histone-like protein family. In terms of assembly, heterodimer of an alpha and a beta chain.

In terms of biological role, this protein is one of the two subunits of integration host factor, a specific DNA-binding protein that functions in genetic recombination as well as in transcriptional and translational control. The chain is Integration host factor subunit beta from Nitrobacter winogradskyi (strain ATCC 25391 / DSM 10237 / CIP 104748 / NCIMB 11846 / Nb-255).